We begin with the raw amino-acid sequence, 3432 residues long: Genome polyprotein (3432 aa).

Residues 2-15 form an interaction with host EXOC1 region; sequence TKKPGGPGKNRAIN. Residues 2–109 lie on the Cytoplasmic side of the membrane; it reads TKKPGGPGKN…RKQNKRGGNE (108 aa). The tract at residues 37–72 is hydrophobic; homodimerization of capsid protein C; it reads LLDGRGPVRFVLALITFFKFTALAPTKALLGRWKAV. The propeptide at 106–127 is ER anchor for the capsid protein C, removed in mature form by serine protease NS3; sequence GGNEGSIMWLASLAVVIAYAGA. A helical membrane pass occupies residues 110 to 130; the sequence is GSIMWLASLAVVIAYAGAMKL. The Extracellular segment spans residues 131-253; the sequence is SNFQGKLLMT…ATRYLMKTEN (123 aa). A glycan (N-linked (GlcNAc...) asparagine; by host) is linked at Asn-142. The helical transmembrane segment at 254-274 threads the bilayer; that stretch reads WIIRNPGYAFLAATLGWMLGS. Over 275 to 279 the chain is Cytoplasmic; sequence NNGQR. The helical transmembrane segment at 280–294 threads the bilayer; that stretch reads VVFTILLLLVAPAYS. Residues 295–746 are Extracellular-facing; the sequence is FNCLGMGNRD…QVFGGAFRTL (452 aa). Intrachain disulfides connect Cys-297-Cys-324, Cys-354-Cys-410, Cys-354-Cys-415, Cys-368-Cys-399, Cys-386-Cys-410, and Cys-386-Cys-415. Residues 392–405 are fusion peptide; that stretch reads DRGWGNGCGLFGKG. Residue Asn-448 is glycosylated (N-linked (GlcNAc...) asparagine; by host). 2 disulfide bridges follow: Cys-484–Cys-581 and Cys-598–Cys-629. The helical transmembrane segment at 747–767 threads the bilayer; the sequence is FGGMSWITQGLMGALLLWMGV. Residues 768–773 are Cytoplasmic-facing; it reads NARDRS. The helical transmembrane segment at 774–794 threads the bilayer; that stretch reads IALAFLATGGVLVFLATNVHA. Over 795 to 1219 the chain is Extracellular; that stretch reads DTGCAIDITR…AFAEANSGGD (425 aa). Cystine bridges form between Cys-798/Cys-809, Cys-849/Cys-937, Cys-973/Cys-1017, Cys-1074/Cys-1123, Cys-1085/Cys-1106, and Cys-1107/Cys-1110. Residues Asn-924 and Asn-1001 are each glycosylated (N-linked (GlcNAc...) asparagine; by host). A helical transmembrane segment spans residues 1220 to 1240; that stretch reads VLHLALIAVFKIQPAFLVMNM. Residues 1241-1250 are Cytoplasmic-facing; it reads LSTRWTNQEN. The chain crosses the membrane as a helical span at residues 1251 to 1271; that stretch reads VVLVLGAALFQLASVDLQIGV. A topological domain (lumenal) is located at residue His-1272. A helical transmembrane segment spans residues 1273–1293; sequence GILNAAAIAWMIVRAITFPTT. The Cytoplasmic segment spans residues 1294 to 1309; that stretch reads SSVTMPVLALLTPGMR. Residues 1310–1330 form a helical membrane-spanning segment; the sequence is ALYLDTYRIILLVIGICSLLQ. Residues 1331–1341 are Lumenal-facing; sequence ERKKTMAKKKG. A helical transmembrane segment spans residues 1342–1362; that stretch reads AVLLGLALTSTGWFSPTTIAA. Residues 1363-1374 are Cytoplasmic-facing; sequence GLMVCNPNKKRG. Residues 1375 to 1395 form a helical membrane-spanning segment; the sequence is WPATEFLSAVGLMFAIVGGLA. Residues 1396–1398 lie on the Lumenal side of the membrane; the sequence is ELD. Residues 1399–1419 form a helical membrane-spanning segment; it reads IESMSIPFMLAGLMAVSYVVS. Over 1420–1476 the chain is Cytoplasmic; that stretch reads GKATDMWLERAADISWEMDAAITGSSRRLDVKLDDDGDFHLIDDPGVPWKVWVLRMS. The segment at 1427-1466 is interacts with and activates NS3 protease; it reads LERAADISWEMDAAITGSSRRLDVKLDDDGDFHLIDDPGV. An intramembrane region (helical) is located at residues 1477–1497; sequence CIGLAALTPWAIVPAAFGYWL. Residues 1498 to 2173 are Cytoplasmic-facing; that stretch reads TLKTTKRGGV…RMALEELPDA (676 aa). The Peptidase S7 domain occupies 1505 to 1682; sequence GGVFWDTPSP…DRQEEPVPEA (178 aa). Catalysis depends on charge relay system; for serine protease NS3 activity residues His-1555, Asp-1579, and Ser-1639. Positions 1685-1841 constitute a Helicase ATP-binding domain; sequence PNMLRKRQMT…DSNAPIHDLQ (157 aa). The tract at residues 1689-1692 is important for RNA-binding; the sequence is RKRQ. An ATP-binding site is contributed by 1698-1705; the sequence is LHPGSGKT. A DEAH box motif is present at residues 1789–1792; sequence DEAH. Positions 1852–2017 constitute a Helicase C-terminal domain; that stretch reads GYEWITEYAG…GLVAQLYGPE (166 aa). The residue at position 1893 (Lys-1893) is an N6-acetyllysine; by host. The interval 1950 to 1971 is disordered; sequence NPSPITSASAAQRRGRVGRNPN. The tract at residues 2168-2172 is regulates the ATPase activity of NS3 helicase; sequence EELPD. Residues 2174 to 2194 form a helical membrane-spanning segment; the sequence is LETITLIVAITVMTGGFFLLM. Over 2195-2199 the chain is Lumenal; sequence MQRKG. An intramembrane region (helical) is located at residues 2200–2220; it reads IGKMGLGALVLTLATFFLWAA. A topological domain (lumenal) is located at residue Glu-2221. The helical transmembrane segment at 2222-2242 threads the bilayer; that stretch reads VPGTKIAGTLLIALLLMVVLI. The Cytoplasmic portion of the chain corresponds to 2243–2257; sequence PEPEKQRSQTDNQLA. Residues 2258–2278 form a helical membrane-spanning segment; it reads VFLICVLTVVGVVAANEYGML. The Lumenal segment spans residues 2279-2311; sequence EKTKADLKSMFVGKTQASGLTGLPSMALDLRPA. The segment at residues 2312-2332 is an intramembrane region (helical); the sequence is TAWALYGGSTVVLTPLLKHLI. The Lumenal segment spans residues 2333 to 2368; it reads TSEYVTTSLASINSQAGSLFVLPRGVPFTDLDLTVG. Residues 2369-2389 traverse the membrane as a helical segment; sequence LVFLGCWGQITLTTFLTAMVL. Over 2390 to 2444 the chain is Cytoplasmic; it reads ATLHYGYMLPGWQAEALRAAQRRTAAGIMKNAVVDGMVATDVPELERTTPLMQKK. Residues 2445 to 2465 form a helical membrane-spanning segment; the sequence is VGQVLLIGVSVAAFLVNPNVT. At 2466 to 2469 the chain is on the lumenal side; it reads TVRE. The chain crosses the membrane as a helical span at residues 2470–2490; sequence AGVLVTAATLTLWDNGASAVW. Residues 2491-3432 lie on the Cytoplasmic side of the membrane; sequence NSTTATGLCH…DVLIQEDRVI (942 aa). The mRNA cap 0-1 NS5-type MT domain occupies 2528 to 2793; sequence GRPGGRTLGE…DVNLGSGTRA (266 aa). Ser-2583 contacts S-adenosyl-L-methionine. A Phosphoserine modification is found at Ser-2583. Residue Lys-2588 is the For 2'-O-MTase activity of the active site. S-adenosyl-L-methionine contacts are provided by Gly-2613, Trp-2614, Thr-2631, Lys-2632, Asp-2658, and Val-2659. Residue Asp-2673 is the For 2'-O-MTase activity of the active site. Ile-2674 contacts S-adenosyl-L-methionine. Catalysis depends on for 2'-O-MTase activity residues Lys-2709 and Glu-2745. Tyr-2747 serves as a coordination point for S-adenosyl-L-methionine. Zn(2+) is bound by residues Glu-2967, His-2971, Cys-2976, and Cys-2979. The RdRp catalytic domain occupies 3057-3209; the sequence is GKMYADDTAG…KPLDDRFATA (153 aa). Positions 3244, 3260, and 3379 each coordinate Zn(2+).

This sequence in the N-terminal section; belongs to the class I-like SAM-binding methyltransferase superfamily. mRNA cap 0-1 NS5-type methyltransferase family. In terms of assembly, homodimer. Interacts (via N-terminus) with host EXOC1 (via C-terminus); this interaction results in EXOC1 degradation through the proteasome degradation pathway. Forms heterodimers with envelope protein E in the endoplasmic reticulum and Golgi. As to quaternary structure, homodimer; in the endoplasmic reticulum and Golgi. Interacts with protein prM. Interacts with non-structural protein 1. Interacts with host HSPA5. In terms of assembly, homodimer; Homohexamer when secreted. Interacts with envelope protein E. NS1 interacts with NS4B. Interacts with host complement protein CFH; this interaction leads to the degradation of C3. Interacts (via N-terminus) with serine protease NS3. As to quaternary structure, forms a heterodimer with serine protease NS3. May form homooligomers. In terms of assembly, forms a heterodimer with NS2B. Interacts with non-structural protein 2A (via N-terminus). Interacts with NS4B. Interacts with unphosphorylated RNA-directed RNA polymerase NS5; this interaction stimulates RNA-directed RNA polymerase NS5 guanylyltransferase activity. Interacts with host ILF2. Interacts with serine protease NS3. As to quaternary structure, homodimer. Interacts with host STAT2; this interaction inhibits the phosphorylation of the latter, and, when all viral proteins are present (polyprotein), targets STAT2 for degradation. Interacts with serine protease NS3. The cofactor is Mn(2+). Mg(2+) is required as a cofactor. Post-translationally, specific enzymatic cleavages in vivo yield mature proteins. Cleavages in the lumen of endoplasmic reticulum are performed by host signal peptidase, whereas cleavages in the cytoplasmic side are performed by serine protease NS3. Signal cleavage at the 2K-4B site requires a prior NS3 protease-mediated cleavage at the 4A-2K site. Cleaved in post-Golgi vesicles by a host furin, releasing the mature small envelope protein M, and peptide pr. This cleavage is incomplete as up to 30% of viral particles still carry uncleaved prM. In terms of processing, N-glycosylated. Post-translationally, N-glycosylated. The excreted form is glycosylated and this is required for efficient secretion of the protein from infected cells. Acetylated by host KAT5. Acetylation modulates NS3 RNA-binding and unwinding activities and plays an important positive role for viral replication. In terms of processing, phosphorylated on serines residues. This phosphorylation may trigger NS5 nuclear localization.

The protein localises to the virion. Its subcellular location is the host nucleus. It is found in the host cytoplasm. It localises to the host perinuclear region. The protein resides in the secreted. The protein localises to the virion membrane. Its subcellular location is the host endoplasmic reticulum membrane. It is found in the host cell surface. The catalysed reaction is Selective hydrolysis of -Xaa-Xaa-|-Yaa- bonds in which each of the Xaa can be either Arg or Lys and Yaa can be either Ser or Ala.. It carries out the reaction RNA(n) + a ribonucleoside 5'-triphosphate = RNA(n+1) + diphosphate. It catalyses the reaction a ribonucleoside 5'-triphosphate + H2O = a ribonucleoside 5'-diphosphate + phosphate + H(+). The enzyme catalyses ATP + H2O = ADP + phosphate + H(+). The catalysed reaction is a 5'-end (5'-triphosphoguanosine)-ribonucleoside in mRNA + S-adenosyl-L-methionine = a 5'-end (N(7)-methyl 5'-triphosphoguanosine)-ribonucleoside in mRNA + S-adenosyl-L-homocysteine. It carries out the reaction a 5'-end (N(7)-methyl 5'-triphosphoguanosine)-ribonucleoside in mRNA + S-adenosyl-L-methionine = a 5'-end (N(7)-methyl 5'-triphosphoguanosine)-(2'-O-methyl-ribonucleoside) in mRNA + S-adenosyl-L-homocysteine + H(+). In terms of biological role, plays a role in virus budding by binding to the cell membrane and gathering the viral RNA into a nucleocapsid that forms the core of a mature virus particle. During virus entry, may induce genome penetration into the host cytoplasm after hemifusion induced by the surface proteins. Can migrate to the cell nucleus where it modulates host functions. Overcomes the anti-viral effects of host EXOC1 by sequestering and degrading the latter through the proteasome degradation pathway. Inhibits RNA silencing by interfering with host Dicer. Functionally, prevents premature fusion activity of envelope proteins in trans-Golgi by binding to envelope protein E at pH 6.0. After virion release in extracellular space, gets dissociated from E dimers. Its function is as follows. Acts as a chaperone for envelope protein E during intracellular virion assembly by masking and inactivating envelope protein E fusion peptide. prM is the only viral peptide matured by host furin in the trans-Golgi network probably to avoid catastrophic activation of the viral fusion activity in acidic Golgi compartment prior to virion release. prM-E cleavage is inefficient, and many virions are only partially matured. These uncleaved prM would play a role in immune evasion. In terms of biological role, may play a role in virus budding. Exerts cytotoxic effects by activating a mitochondrial apoptotic pathway through M ectodomain. May display a viroporin activity. Binds to host cell surface receptor and mediates fusion between viral and cellular membranes. Efficient virus attachment to cell is, at least in part, mediated by host HSPA5. Envelope protein is synthesized in the endoplasmic reticulum in the form of heterodimer with protein prM. They play a role in virion budding in the ER, and the newly formed immature particle is covered with 60 spikes composed of heterodimer between precursor prM and envelope protein E. The virion is transported to the Golgi apparatus where the low pH causes dissociation of PrM-E heterodimers and formation of E homodimers. prM-E cleavage is inefficient, and many virions are only partially matured. These uncleaved prM would play a role in immune evasion. Functionally, involved in immune evasion, pathogenesis and viral replication. Once cleaved off the polyprotein, is targeted to three destinations: the viral replication cycle, the plasma membrane and the extracellular compartment. Essential for viral replication. Required for formation of the replication complex and recruitment of other non-structural proteins to the ER-derived membrane structures. Excreted as a hexameric lipoparticle that plays a role against host immune response. Antagonizing the complement function. Binds to the host macrophages and dendritic cells. Inhibits signal transduction originating from Toll-like receptor 3 (TLR3). Its function is as follows. Component of the viral RNA replication complex that functions in virion assembly and antagonizes the host alpha/beta interferon antiviral response. In terms of biological role, required cofactor for the serine protease function of NS3. May have membrane-destabilizing activity and form viroporins. Displays three enzymatic activities: serine protease, NTPase and RNA helicase. NS3 serine protease, in association with NS2B, performs its autocleavage and cleaves the polyprotein at dibasic sites in the cytoplasm: C-prM, NS2A-NS2B, NS2B-NS3, NS3-NS4A, NS4A-2K and NS4B-NS5. NS3 RNA helicase binds RNA and unwinds dsRNA in the 3' to 5' direction. Functionally, regulates the ATPase activity of the NS3 helicase activity. NS4A allows NS3 helicase to conserve energy during unwinding. Its function is as follows. Functions as a signal peptide for NS4B and is required for the interferon antagonism activity of the latter. In terms of biological role, induces the formation of ER-derived membrane vesicles where the viral replication takes place. Inhibits interferon (IFN)-induced host STAT1 phosphorylation and nuclear translocation, thereby preventing the establishment of cellular antiviral state by blocking the IFN-alpha/beta pathway. Inhibits STAT2 translocation in the nucleus after IFN-alpha treatment. Replicates the viral (+) and (-) RNA genome, and performs the capping of genomes in the cytoplasm. NS5 methylates viral RNA cap at guanine N-7 and ribose 2'-O positions. Besides its role in RNA genome replication, also prevents the establishment of cellular antiviral state by blocking the interferon-alpha/beta (IFN-alpha/beta) signaling pathway. Inhibits host TYK2 and STAT2 phosphorylation, thereby preventing activation of JAK-STAT signaling pathway. This chain is Genome polyprotein, found in Ardeidae (herons).